The following is a 593-amino-acid chain: Transcriptional repressor p66-beta (593 aa).

Ser17 bears the Phosphoserine mark. Residues Lys33, Lys66, and Lys97 each participate in a glycyl lysine isopeptide (Lys-Gly) (interchain with G-Cter in SUMO2) cross-link. Positions 62–123 (ELPTKQDGSG…PERGRLTPSP (62 aa)) are disordered. Composition is skewed to basic and acidic residues over residues 74–100 (GYEE…KENI) and 108–118 (SARRSEPERGR). Thr120 carries the phosphothreonine modification. Ser122, Ser129, Ser134, and Ser135 each carry phosphoserine. The stretch at 140–194 (SRMEERLKAANLEMFKGKGIEERQQLIKQLRDELRLEEARLVLLKKLRQSQLQKE) forms a coiled coil. Lys147 participates in a covalent cross-link: Glycyl lysine isopeptide (Lys-Gly) (interchain with G-Cter in SUMO2). The interval 165-195 (LIKQLRDELRLEEARLVLLKKLRQSQLQKEN) is CR1; interaction with MBD2 and MBD3. Lys199 participates in a covalent cross-link: Glycyl lysine isopeptide (Lys-Gly) (interchain with G-Cter in SUMO2). A Phosphoserine modification is found at Ser208. Residues 213 to 235 (SPAHVGQQGLSKLPSRPGAQGVE) are disordered. Lys281 is covalently cross-linked (Glycyl lysine isopeptide (Lys-Gly) (interchain with G-Cter in SUMO2)). 3 positions are modified to phosphoserine: Ser333, Ser338, and Ser340. A CR2; histone tail-binding region spans residues 340–480 (SAMTDAANSQ…QEQEIEQRLQ (141 aa)). Glycyl lysine isopeptide (Lys-Gly) (interchain with G-Cter in SUMO2) cross-links involve residues Lys353, Lys454, and Lys467. The GATA-type zinc finger occupies 414–467 (RVEPFVCAQCRTDFTPHWKQEKNGKILCEQCMTSNQKKALKAEHTNRLKNAFVK). A coiled-coil region spans residues 449–482 (QKKALKAEHTNRLKNAFVKALQQEQEIEQRLQQQ). The residue at position 486 (Ser486) is a Phosphoserine. Lys498 participates in a covalent cross-link: Glycyl lysine isopeptide (Lys-Gly) (interchain with G-Cter in SUMO2).

Homooligomer. Component of the nucleosome remodeling and deacetylase (NuRD) repressor complex, composed of core proteins MTA1, MTA2, MTA3, RBBP4, RBBP7, HDAC1, HDAC2, MBD2, MBD3, and peripherally associated proteins CDK2AP1, CDK2AP2, GATAD2A, GATAD2B, CHD3, CHD4 and CHD5. The exact stoichiometry of the NuRD complex is unknown, and some subunits such as MBD2 and MBD3, GATAD2A and GATAD2B, and CHD3, CHD4 and CHD5 define mutually exclusive NuRD complexes. Interacts with MBD2; this is required for the enhancement of MBD2-mediated repression and for targeting to the chromatin. Interacts with MBD3. Component of the MeCP1 histone deacetylase complex. Interacts with histone tails, including that of histones H2A, H2B, H3 and H4. Interacts with ERCC6. In terms of tissue distribution, widely expressed.

Its subcellular location is the nucleus speckle. It localises to the nucleus. The protein resides in the chromosome. Functionally, transcriptional repressor. Acts as a component of the histone deacetylase NuRD complex which participates in the remodeling of chromatin. Enhances MBD2-mediated repression. Efficient repression requires the presence of GATAD2A. Targets MBD3 to discrete loci in the nucleus. May play a role in synapse development. The protein is Transcriptional repressor p66-beta (GATAD2B) of Homo sapiens (Human).